A 709-amino-acid chain; its full sequence is Cell adhesion molecule CEACAM3 (709 aa).

Positions 1-34 are cleaved as a signal peptide; that stretch reads MELSSVLPCKRCTPWRGLLLTASLLTCWLLPTTA. Ig-like V-type domains follow at residues 35-142, 155-262, 275-382, 393-500, and 509-616; these read QVSI…HVYF, QLSI…QVDT, QLTV…QVNT, LLTI…SVHT, and QLVI…HIYK. Residues Asn73, Asn86, Asn103, Asn110, Asn133, Asn207, Asn224, Asn231, Asn327, Asn344, Asn351, Asn381, Asn462, Asn561, Asn578, and Asn585 are each glycosylated (N-linked (GlcNAc...) asparagine). The region spanning 631–695 is the Ig-like C2-type domain; that stretch reads RVKSSVVLTC…YRCEVSNPVS (65 aa).

Belongs to the immunoglobulin superfamily. CEA family. In terms of tissue distribution, expression detected only in placenta.

Possibly involved in cell adhesion. This is Cell adhesion molecule CEACAM3 from Rattus norvegicus (Rat).